The sequence spans 190 residues: Ribosome hibernation promotion factor (190 aa).

The protein belongs to the HPF/YfiA ribosome-associated protein family. Long HPF subfamily. Interacts with 100S ribosomes.

Its subcellular location is the cytoplasm. In terms of biological role, required for dimerization of active 70S ribosomes into 100S ribosomes in stationary phase; 100S ribosomes are translationally inactive and sometimes present during exponential growth. This chain is Ribosome hibernation promotion factor, found in Staphylococcus saprophyticus subsp. saprophyticus (strain ATCC 15305 / DSM 20229 / NCIMB 8711 / NCTC 7292 / S-41).